Reading from the N-terminus, the 374-residue chain is Flagellar P-ring protein 1 (374 aa).

The first 29 residues, 1-29 (MPGVRWVRIVGVACAALSALALSVTSASA), serve as a signal peptide directing secretion.

Belongs to the FlgI family. The basal body constitutes a major portion of the flagellar organelle and consists of four rings (L,P,S, and M) mounted on a central rod.

Its subcellular location is the periplasm. It is found in the bacterial flagellum basal body. In terms of biological role, assembles around the rod to form the L-ring and probably protects the motor/basal body from shearing forces during rotation. The chain is Flagellar P-ring protein 1 from Bradyrhizobium diazoefficiens (strain JCM 10833 / BCRC 13528 / IAM 13628 / NBRC 14792 / USDA 110).